Reading from the N-terminus, the 726-residue chain is Myb-like protein Z (726 aa).

Disordered regions lie at residues 15 to 109, 124 to 149, 161 to 239, and 272 to 303; these read DSND…SLSN, ASPS…YHPY, HYVS…TKQQ, and LIPS…NMRS. The span at 18–39 shows a compositional bias: low complexity; sequence DNNNNNNNNNNSNNNNNNNNNN. Residues 45–80 show a composition bias toward polar residues; it reads SSATSSPTGQDSTIDRPNSPSSSIKFTYPSKNSIVT. A compositionally biased stretch (low complexity) spans 81-108; the sequence is SPSSLQLPSPSFSSSSSSSSSSSSSSLS. The span at 124-147 shows a compositional bias: polar residues; the sequence is ASPSKSSENSPTIHTSSLSPNSYH. A compositionally biased stretch (low complexity) spans 165–177; it reads NNNNNNNNNNNNN. The segment covering 183–209 has biased composition (polar residues); it reads SSELYNTSPSISSKTTPNGSSTNNSPF. Residues 221 to 239 show a composition bias toward low complexity; it reads NNNNNNNNDRNENNTTKQQ. Residues 329-388 form the Myb-like domain; sequence IPIATRKLWSQEECCRLLEMVFQRDPQSVTSKESELRWRSIASTLGRTVTSTRKKYMRLM. Low complexity predominate over residues 516–651; that stretch reads KQIQQQQKQK…NNNYRSSLSP (136 aa). The disordered stretch occupies residues 516 to 726; sequence KQIQQQQKQK…NNNNYNNYHN (211 aa). Residues 661-675 show a composition bias toward polar residues; it reads QSPQQKSNNENQQNF. Residues 709–726 are compositionally biased toward low complexity; that stretch reads NLNNNNNNNNNNYNNYHN.

This Dictyostelium discoideum (Social amoeba) protein is Myb-like protein Z (mybZ).